Reading from the N-terminus, the 209-residue chain is Transcription antitermination protein NusB (209 aa).

Belongs to the NusB family.

Functionally, involved in transcription antitermination. Required for transcription of ribosomal RNA (rRNA) genes. Binds specifically to the boxA antiterminator sequence of the ribosomal RNA (rrn) operons. This chain is Transcription antitermination protein NusB, found in Crocosphaera subtropica (strain ATCC 51142 / BH68) (Cyanothece sp. (strain ATCC 51142)).